A 510-amino-acid polypeptide reads, in one-letter code: Histidine ammonia-lyase (510 aa).

The 5-imidazolinone (Ala-Gly) cross-link spans 143–145 (ASG). The residue at position 144 (Ser144) is a 2,3-didehydroalanine (Ser).

This sequence belongs to the PAL/histidase family. Contains an active site 4-methylidene-imidazol-5-one (MIO), which is formed autocatalytically by cyclization and dehydration of residues Ala-Ser-Gly.

It localises to the cytoplasm. It catalyses the reaction L-histidine = trans-urocanate + NH4(+). The protein operates within amino-acid degradation; L-histidine degradation into L-glutamate; N-formimidoyl-L-glutamate from L-histidine: step 1/3. This Aliivibrio fischeri (strain MJ11) (Vibrio fischeri) protein is Histidine ammonia-lyase.